Here is a 20-residue protein sequence, read N- to C-terminus: C-reactive protein (20 aa).

The Pentraxin (PTX) domain maps to 1–20 (SPVAASYRATAGLAGKALDF).

Belongs to the pentraxin family. In terms of assembly, homodimer; disulfide-linked. It is not known if it assembles into a pentraxin (or pentaxin) structure. Pentraxins have a discoid arrangement of 5 non-covalently bound subunits. In terms of processing, glycosylated.

Its subcellular location is the secreted. Displays several functions associated with host defense: it promotes agglutination, bacterial capsular swelling, phagocytosis, and complement fixation through its calcium-dependent binding to phosphorylcholine. This Mustelus canis (Smooth dogfish) protein is C-reactive protein.